Consider the following 360-residue polypeptide: NAD(P)H-quinone oxidoreductase subunit 1, chloroplastic (360 aa).

9 helical membrane-spanning segments follow: residues 27-47 (IWIF…VLVI), 98-118 (FSIG…VIPF), 129-149 (IGIF…LMSG), 165-185 (AAQS…ISLL), 203-223 (FWGW…ISSL), 248-268 (YSGI…LISS), 269-289 (LFVT…ISIL), 297-317 (IFGT…FLFI), and 340-360 (FLLP…LFSL).

Belongs to the complex I subunit 1 family. In terms of assembly, NDH is composed of at least 16 different subunits, 5 of which are encoded in the nucleus.

The protein localises to the plastid. Its subcellular location is the chloroplast thylakoid membrane. The enzyme catalyses a plastoquinone + NADH + (n+1) H(+)(in) = a plastoquinol + NAD(+) + n H(+)(out). It carries out the reaction a plastoquinone + NADPH + (n+1) H(+)(in) = a plastoquinol + NADP(+) + n H(+)(out). Functionally, NDH shuttles electrons from NAD(P)H:plastoquinone, via FMN and iron-sulfur (Fe-S) centers, to quinones in the photosynthetic chain and possibly in a chloroplast respiratory chain. The immediate electron acceptor for the enzyme in this species is believed to be plastoquinone. Couples the redox reaction to proton translocation, and thus conserves the redox energy in a proton gradient. In Nasturtium officinale (Watercress), this protein is NAD(P)H-quinone oxidoreductase subunit 1, chloroplastic.